Consider the following 119-residue polypeptide: Large ribosomal subunit protein bL20 (119 aa).

Belongs to the bacterial ribosomal protein bL20 family.

Binds directly to 23S ribosomal RNA and is necessary for the in vitro assembly process of the 50S ribosomal subunit. It is not involved in the protein synthesizing functions of that subunit. This is Large ribosomal subunit protein bL20 from Gloeobacter violaceus (strain ATCC 29082 / PCC 7421).